The sequence spans 214 residues: Phosphatidylserine decarboxylase proenzyme (214 aa).

Ser-182 functions as the Schiff-base intermediate with substrate; via pyruvic acid in the catalytic mechanism. Ser-182 is subject to Pyruvic acid (Ser); by autocatalysis.

It belongs to the phosphatidylserine decarboxylase family. PSD-A subfamily. As to quaternary structure, heterodimer of a large membrane-associated beta subunit and a small pyruvoyl-containing alpha subunit. Requires pyruvate as cofactor. Post-translationally, is synthesized initially as an inactive proenzyme. Formation of the active enzyme involves a self-maturation process in which the active site pyruvoyl group is generated from an internal serine residue via an autocatalytic post-translational modification. Two non-identical subunits are generated from the proenzyme in this reaction, and the pyruvate is formed at the N-terminus of the alpha chain, which is derived from the carboxyl end of the proenzyme. The post-translation cleavage follows an unusual pathway, termed non-hydrolytic serinolysis, in which the side chain hydroxyl group of the serine supplies its oxygen atom to form the C-terminus of the beta chain, while the remainder of the serine residue undergoes an oxidative deamination to produce ammonia and the pyruvoyl prosthetic group on the alpha chain.

The protein resides in the cell membrane. It carries out the reaction a 1,2-diacyl-sn-glycero-3-phospho-L-serine + H(+) = a 1,2-diacyl-sn-glycero-3-phosphoethanolamine + CO2. The protein operates within phospholipid metabolism; phosphatidylethanolamine biosynthesis; phosphatidylethanolamine from CDP-diacylglycerol: step 2/2. In terms of biological role, catalyzes the formation of phosphatidylethanolamine (PtdEtn) from phosphatidylserine (PtdSer). This Burkholderia lata (strain ATCC 17760 / DSM 23089 / LMG 22485 / NCIMB 9086 / R18194 / 383) protein is Phosphatidylserine decarboxylase proenzyme.